Here is a 174-residue protein sequence, read N- to C-terminus: Adenylate kinase (174 aa).

The NMP stretch occupies residues 12–41 (STGDMLRAAIKAGTPLGLEAKKIIDEGGLV). AMP contacts are provided by residues threonine 13, arginine 18, 39–41 (GLV), 67–70 (GFPR), and glutamine 74. Residues 104–141 (GRRVHLASGRTYHVTYNPPKVEGKDDVTGEDLIQRDDD) are LID. ATP is bound by residues arginine 105 and 114-115 (TY). Positions 138 and 149 each coordinate AMP.

Belongs to the adenylate kinase family. Monomer.

It is found in the cytoplasm. It carries out the reaction AMP + ATP = 2 ADP. It functions in the pathway purine metabolism; AMP biosynthesis via salvage pathway; AMP from ADP: step 1/1. Its function is as follows. Catalyzes the reversible transfer of the terminal phosphate group between ATP and AMP. Plays an important role in cellular energy homeostasis and in adenine nucleotide metabolism. The protein is Adenylate kinase of Neisseria cinerea.